A 252-amino-acid chain; its full sequence is Phosphate import ATP-binding protein PstB 1 (252 aa).

Residues 6-247 (LQVSDLSVYY…PKHKETEDYI (242 aa)) enclose the ABC transporter domain. 38 to 45 (GPSGSGKS) lines the ATP pocket.

The protein belongs to the ABC transporter superfamily. Phosphate importer (TC 3.A.1.7) family. The complex is composed of two ATP-binding proteins (PstB), two transmembrane proteins (PstC and PstA) and a solute-binding protein (PstS).

The protein localises to the cell membrane. The enzyme catalyses phosphate(out) + ATP + H2O = ADP + 2 phosphate(in) + H(+). In terms of biological role, part of the ABC transporter complex PstSACB involved in phosphate import. Responsible for energy coupling to the transport system. The chain is Phosphate import ATP-binding protein PstB 1 from Streptococcus agalactiae serotype Ia (strain ATCC 27591 / A909 / CDC SS700).